A 146-amino-acid polypeptide reads, in one-letter code: Large ribosomal subunit protein uL15 (146 aa).

The interval 1-58 is disordered; the sequence is MNLSELRPAPGARKKPTRKGQGIGSGLGKTAGKGHKGQNARSGGGVRPGFEGGQMPLQ. Composition is skewed to gly residues over residues 21–31 and 42–52; these read QGIGSGLGKTA and SGGGVRPGFEG.

This sequence belongs to the universal ribosomal protein uL15 family. As to quaternary structure, part of the 50S ribosomal subunit.

Functionally, binds to the 23S rRNA. This Desulforamulus reducens (strain ATCC BAA-1160 / DSM 100696 / MI-1) (Desulfotomaculum reducens) protein is Large ribosomal subunit protein uL15.